Here is a 376-residue protein sequence, read N- to C-terminus: O-demethylpuromycin-O-methyltransferase (376 aa).

The disordered stretch occupies residues 1–28 (MAPTEATRGGPADPAPAPEAHRGGHTEH). Basic and acidic residues predominate over residues 19–28 (EAHRGGHTEH). S-adenosyl-L-methionine contacts are provided by residues Asp235 and 261–263 (GDF). His281 functions as the Proton acceptor in the catalytic mechanism.

This sequence belongs to the class I-like SAM-binding methyltransferase superfamily. Cation-independent O-methyltransferase family.

It carries out the reaction O-demethylpuromycin + S-adenosyl-L-methionine = puromycin + S-adenosyl-L-homocysteine + H(+). The polypeptide is O-demethylpuromycin-O-methyltransferase (dmpM) (Streptomyces alboniger).